Reading from the N-terminus, the 217-residue chain is Small ribosomal subunit protein uS3 (217 aa).

One can recognise a KH type-2 domain in the interval 38 to 106 (IRKFIDNELK…KVHINVIEIK (69 aa)).

Belongs to the universal ribosomal protein uS3 family. Part of the 30S ribosomal subunit. Forms a tight complex with proteins S10 and S14.

Its function is as follows. Binds the lower part of the 30S subunit head. Binds mRNA in the 70S ribosome, positioning it for translation. The protein is Small ribosomal subunit protein uS3 (rpsC) of Staphylococcus aureus (strain COL).